The following is a 275-amino-acid chain: Diaminopimelate epimerase (275 aa).

Residues Asn13, Gln46, and Asn66 each contribute to the substrate site. Cys75 acts as the Proton donor in catalysis. Substrate-binding positions include 76-77 (GN), Asn159, Asn192, and 210-211 (ER). Residue Cys219 is the Proton acceptor of the active site. Substrate is bound at residue 220–221 (GT).

It belongs to the diaminopimelate epimerase family. In terms of assembly, homodimer.

The protein resides in the cytoplasm. It carries out the reaction (2S,6S)-2,6-diaminopimelate = meso-2,6-diaminopimelate. Its pathway is amino-acid biosynthesis; L-lysine biosynthesis via DAP pathway; DL-2,6-diaminopimelate from LL-2,6-diaminopimelate: step 1/1. Its function is as follows. Catalyzes the stereoinversion of LL-2,6-diaminopimelate (L,L-DAP) to meso-diaminopimelate (meso-DAP), a precursor of L-lysine and an essential component of the bacterial peptidoglycan. The protein is Diaminopimelate epimerase of Psychromonas ingrahamii (strain DSM 17664 / CCUG 51855 / 37).